The chain runs to 492 residues: Endoglucanase 15 (492 aa).

Residues 1 to 30 (MSCISSQCFITIKSICIVLLLSITCGAVSA) form the signal peptide. Catalysis depends on Asp86, which acts as the Nucleophile. Residues His414, Asp466, and Glu475 contribute to the active site.

This sequence belongs to the glycosyl hydrolase 9 (cellulase E) family.

The protein localises to the secreted. The enzyme catalyses Endohydrolysis of (1-&gt;4)-beta-D-glucosidic linkages in cellulose, lichenin and cereal beta-D-glucans.. This Arabidopsis thaliana (Mouse-ear cress) protein is Endoglucanase 15.